The sequence spans 171 residues: 3-hydroxydecanoyl-[acyl-carrier-protein] dehydratase (171 aa).

The active site involves His70.

This sequence belongs to the thioester dehydratase family. FabA subfamily. As to quaternary structure, homodimer.

It localises to the cytoplasm. It carries out the reaction a (3R)-hydroxyacyl-[ACP] = a (2E)-enoyl-[ACP] + H2O. It catalyses the reaction (3R)-hydroxydecanoyl-[ACP] = (2E)-decenoyl-[ACP] + H2O. The catalysed reaction is (2E)-decenoyl-[ACP] = (3Z)-decenoyl-[ACP]. It participates in lipid metabolism; fatty acid biosynthesis. In terms of biological role, necessary for the introduction of cis unsaturation into fatty acids. Catalyzes the dehydration of (3R)-3-hydroxydecanoyl-ACP to E-(2)-decenoyl-ACP and then its isomerization to Z-(3)-decenoyl-ACP. Can catalyze the dehydratase reaction for beta-hydroxyacyl-ACPs with saturated chain lengths up to 16:0, being most active on intermediate chain length. The protein is 3-hydroxydecanoyl-[acyl-carrier-protein] dehydratase of Pseudomonas fluorescens (strain ATCC BAA-477 / NRRL B-23932 / Pf-5).